We begin with the raw amino-acid sequence, 175 residues long: Bifunctional protein PyrR (175 aa).

Residues 40-41 (TR), 102-110 (DDVLYTGRT), R135, and V159 each bind substrate. A PRPP-binding motif is present at residues 98-110 (VVIIDDVLYTGRT).

Belongs to the purine/pyrimidine phosphoribosyltransferase family. PyrR subfamily. As to quaternary structure, homodimer and homohexamer; in equilibrium.

The catalysed reaction is UMP + diphosphate = 5-phospho-alpha-D-ribose 1-diphosphate + uracil. Its function is as follows. Regulates transcriptional attenuation of the pyrimidine nucleotide (pyr) operon by binding in a uridine-dependent manner to specific sites on pyr mRNA. This disrupts an antiterminator hairpin in the RNA and favors formation of a downstream transcription terminator, leading to a reduced expression of downstream genes. Also displays a weak uracil phosphoribosyltransferase activity which is not physiologically significant. The chain is Bifunctional protein PyrR from Staphylococcus epidermidis (strain ATCC 12228 / FDA PCI 1200).